Reading from the N-terminus, the 73-residue chain is Protein SlyX homolog (73 aa).

The protein belongs to the SlyX family.

The polypeptide is Protein SlyX homolog (Actinobacillus pleuropneumoniae serotype 5b (strain L20)).